The following is a 295-amino-acid chain: MGHFSEELQQVQTRINRFLEAQFEGIESHNAPLLEAMKYALLLGGKRVRPFLVYATGQMLGAEKQTLDYAAAAIEAIHAYSLIHDDLPAMDDDNLRRGHPTCHIQFDEATAILAGDALQSFAFEILTKTPNISTEQKLALIQILAQGAGVQGMCLGQSLDLISEHKQISLSELELIHRNKTGALLIAALKLGFICSPHFTDKRLEQSLTQYAEAIGLAFQVQDDILDIEGDSAEIGKQVGADLDLDKSTYPKLLGLSGAKQKAQDLYQSALSELEKIPFDTTVRALAEFIITRKS.

Residues lysine 46, arginine 49, and histidine 78 each coordinate isopentenyl diphosphate. The Mg(2+) site is built by aspartate 85 and aspartate 91. Arginine 96 is a binding site for (2E)-geranyl diphosphate. An isopentenyl diphosphate-binding site is contributed by arginine 97. Residues lysine 180, threonine 181, glutamine 220, and lysine 237 each contribute to the (2E)-geranyl diphosphate site.

The protein belongs to the FPP/GGPP synthase family. Mg(2+) is required as a cofactor.

It is found in the cytoplasm. It catalyses the reaction isopentenyl diphosphate + (2E)-geranyl diphosphate = (2E,6E)-farnesyl diphosphate + diphosphate. This Haemophilus influenzae (strain ATCC 51907 / DSM 11121 / KW20 / Rd) protein is Farnesyl diphosphate synthase (ispA).